The following is a 298-amino-acid chain: MWAFRTARIGSLLAATSVILRRCLRLGVAMAKSKFEYVRNFEVQDTCLPHCWVVVRLDGRNFHRFAEEHNFAKPNDSRALHLMTKCAQTVMEELEDIVIAYGQSDEYSFVFRKKSNWFKRRASKFMTLVASQFASSYVFYWRDYFEDQPLRYPPGFDGRVVLYPSNQTLKDYLSWRQADCHINNLYNTVFWALIQQSGLTPVQAQQRLKGTLTADKNEILFSEFHINYNNEPHMYRKGTVLVWQKVEEVRTQEVRLPAEMEGEKKAVARTRTRVVALNCDLIGDAFWKEHPEILAEEN.

Residues Asp58, Gly59, and Asp105 each contribute to the Mg(2+) site. Residues 58-63 (DGRNFH) and 104-105 (SD) each bind GTP.

The protein belongs to the tRNA(His) guanylyltransferase family. In terms of assembly, homotetramer. Interacts with MFN1 and MFN2; functions as a guanyl-nucleotide exchange factor/GEF for MFN2 and also probably MFN1. Mg(2+) is required as a cofactor.

It localises to the cytoplasm. It is found in the mitochondrion. It catalyses the reaction a 5'-end ribonucleotide-tRNA(His) + GTP + ATP + H2O = a 5'-end phospho-guanosine-ribonucleotide-tRNA(His) + AMP + 2 diphosphate + H(+). Adds a GMP to the 5'-end of tRNA(His) after transcription and RNase P cleavage. This step is essential for proper recognition of the tRNA and for the fidelity of protein synthesis. Also functions as a guanyl-nucleotide exchange factor/GEF for the MFN1 and MFN2 mitofusins thereby regulating mitochondrial fusion. By regulating both mitochondrial dynamics and bioenergetic function, it contributes to cell survival following oxidative stress. This Mus musculus (Mouse) protein is Probable tRNA(His) guanylyltransferase (Thg1l).